Reading from the N-terminus, the 693-residue chain is eEF1A lysine and N-terminal methyltransferase (693 aa).

The protein belongs to the methyltransferase superfamily.

The catalysed reaction is L-lysyl-[protein] + S-adenosyl-L-methionine = N(6)-methyl-L-lysyl-[protein] + S-adenosyl-L-homocysteine + H(+). It catalyses the reaction N(6)-methyl-L-lysyl-[protein] + S-adenosyl-L-methionine = N(6),N(6)-dimethyl-L-lysyl-[protein] + S-adenosyl-L-homocysteine + H(+). The enzyme catalyses N-terminal glycyl-L-lysyl-L-glutamyl-[protein] + 3 S-adenosyl-L-methionine = N-terminal N,N,N-trimethyl-glycyl-L-lysyl-L-glutamyl-[protein] + 3 S-adenosyl-L-homocysteine + 3 H(+). In terms of biological role, dual methyltransferase that catalyzes methylation of elongation factor 1-alpha (eef1a1 and eef1a2) at two different positions, and is therefore involved in the regulation of mRNA translation. Via its C-terminus, methylates the N-terminus of eef1a1 and eef1a2. Via its N-terminus dimethylates lysine residues of eef1a1 and eef1a2. This chain is eEF1A lysine and N-terminal methyltransferase (mettl13), found in Xenopus laevis (African clawed frog).